A 71-amino-acid chain; its full sequence is DNA-directed RNA polymerases I, II, and III subunit RPABC5 (71 aa).

C7, C10, C44, and C45 together coordinate Zn(2+).

This sequence belongs to the archaeal Rpo10/eukaryotic RPB10 RNA polymerase subunit family. As to quaternary structure, component of the RNA polymerase I (Pol I), RNA polymerase II (Pol II) and RNA polymerase III (Pol III) complexes consisting of at least 13, 12 and 17 subunits, respectively.

It is found in the nucleus. Functionally, DNA-dependent RNA polymerase catalyzes the transcription of DNA into RNA using the four ribonucleoside triphosphates as substrates. Common component of RNA polymerases I, II and III which synthesize ribosomal RNA precursors, mRNA precursors and many functional non-coding RNAs, and a small RNAs, such as 5S rRNA and tRNAs, respectively. Pol II is the central component of the basal RNA polymerase II transcription machinery. Pols are composed of mobile elements that move relative to each other. In Pol II, RBP10 is part of the core element with the central large cleft. This Brassica napus (Rape) protein is DNA-directed RNA polymerases I, II, and III subunit RPABC5.